The following is a 360-amino-acid chain: UPF0496 protein At3g19250 (360 aa).

Residues 1–29 (MPHCFTFKPASPEGSLGDDHLPHPSPEGS) form a disordered region. The next 2 helical transmembrane spans lie at 205 to 225 (HHAT…VAAS) and 229 to 249 (IAYH…TPYL).

Belongs to the UPF0496 family.

The protein resides in the membrane. The chain is UPF0496 protein At3g19250 from Arabidopsis thaliana (Mouse-ear cress).